The sequence spans 301 residues: MTTSPSSSDYSSTEDSIYECKSNQSASVGYYPSENTFSYEDLVSREETASVDSLVHFLPPVQSTWRTESLRRLFRKRDQVEHDPEQFSKLSITLAWDIDVDSNHADSLANLDLNAHSQWMDKWPEDKTKLTPCKLYNLVQKLETFLGKEKGGQHDGCVLPESTQKEDVHLNSTTPPHTAQVSPKERDVCQDLSKQRSLENEDICQVLEDPPRLLKDEVVQEIRQASESSLETSSVSSPQPEGASRSHNIFCMNFRWVFQWLRTQIFSRWRRQRPSQATNTWHQKAVRNIHSLRSNRIQPQE.

Disordered regions lie at residues 167–186 (DVHL…PKER) and 225–244 (ASES…EGAS). Over residues 170-181 (LNSTTPPHTAQV) the composition is skewed to polar residues. Residues 226–237 (SESSLETSSVSS) show a composition bias toward low complexity.

This is an uncharacterized protein from Mus musculus (Mouse).